The following is a 179-amino-acid chain: Interleukin-10 (179 aa).

Positions 1 to 19 (MPSSSALLCCLVFLAGVAA) are cleaved as a signal peptide. 2 cysteine pairs are disulfide-bonded: Cys-31–Cys-127 and Cys-81–Cys-133. Asn-135 is a glycosylation site (N-linked (GlcNAc...) asparagine).

Belongs to the IL-10 family. Homodimer. Interacts with IL10RA and IL10RB.

The protein resides in the secreted. Its function is as follows. Major immune regulatory cytokine that acts on many cells of the immune system where it has profound anti-inflammatory functions, limiting excessive tissue disruption caused by inflammation. Mechanistically, IL10 binds to its heterotetrameric receptor comprising IL10RA and IL10RB leading to JAK1 and STAT2-mediated phosphorylation of STAT3. In turn, STAT3 translocates to the nucleus where it drives expression of anti-inflammatory mediators. Targets antigen-presenting cells (APCs) such as macrophages and monocytes and inhibits their release of pro-inflammatory cytokines including granulocyte-macrophage colony-stimulating factor /GM-CSF, granulocyte colony-stimulating factor/G-CSF, IL-1 alpha, IL-1 beta, IL-6, IL-8 and TNF-alpha. Also interferes with antigen presentation by reducing the expression of MHC-class II and co-stimulatory molecules, thereby inhibiting their ability to induce T cell activation. In addition, controls the inflammatory response of macrophages by reprogramming essential metabolic pathways including mTOR signaling. The protein is Interleukin-10 (IL10) of Bubalus carabanensis (Swamp type water buffalo).